Reading from the N-terminus, the 2281-residue chain is Protein Ycf2 (2281 aa).

Gly1635–Ser1642 contributes to the ATP binding site.

This sequence belongs to the Ycf2 family.

It is found in the plastid. The protein localises to the chloroplast stroma. Its function is as follows. Probable ATPase of unknown function. Its presence in a non-photosynthetic plant (Epifagus virginiana) and experiments in tobacco indicate that it has an essential function which is probably not related to photosynthesis. The chain is Protein Ycf2 from Coffea arabica (Arabian coffee).